The chain runs to 269 residues: F-box protein At5g52880 (269 aa).

An F-box domain is found at 109-155 (DIDIPSLPQDILIHIFSFLEISSLVSSAQVSRSWNQATHENSLWQSQ).

The protein is F-box protein At5g52880 of Arabidopsis thaliana (Mouse-ear cress).